A 207-amino-acid polypeptide reads, in one-letter code: dTTP/UTP pyrophosphatase (207 aa).

Asp79 (proton acceptor) is an active-site residue.

The protein belongs to the Maf family. YhdE subfamily. Requires a divalent metal cation as cofactor.

It is found in the cytoplasm. It catalyses the reaction dTTP + H2O = dTMP + diphosphate + H(+). The enzyme catalyses UTP + H2O = UMP + diphosphate + H(+). Nucleoside triphosphate pyrophosphatase that hydrolyzes dTTP and UTP. May have a dual role in cell division arrest and in preventing the incorporation of modified nucleotides into cellular nucleic acids. The protein is dTTP/UTP pyrophosphatase of Nitrobacter hamburgensis (strain DSM 10229 / NCIMB 13809 / X14).